Here is a 145-residue protein sequence, read N- to C-terminus: Hemoglobin fetal subunit beta (145 aa).

Positions 1 to 145 constitute a Globin domain; that stretch reads MLSAEEKASV…VANALAHRYH (145 aa). Heme b is bound by residues His62 and His91.

It belongs to the globin family. In terms of assembly, heterotetramer of two alpha chains and two beta chains. Red blood cells.

Its function is as follows. Involved in oxygen transport from the lung to the various peripheral tissues. This Capra hircus (Goat) protein is Hemoglobin fetal subunit beta.